We begin with the raw amino-acid sequence, 262 residues long: Spindlin-Z (262 aa).

The disordered stretch occupies residues 1 to 50 (MKTPFGKSPGQRSRADAGHAGVSASMMKKRTSHKKHRNNVGPSKPISQPR). A compositionally biased stretch (basic residues) spans 27 to 38 (MKKRTSHKKHRN).

The protein belongs to the SPIN/STSY family. In terms of tissue distribution, expressed in several tissues including testis.

Its subcellular location is the nucleus. May play a role in mitosis. This is Spindlin-Z (SPINZ) from Gallus gallus (Chicken).